Reading from the N-terminus, the 145-residue chain is RNA polymerase I-specific transcription initiation factor RRN10 (145 aa).

As to quaternary structure, component of the UAF (upstream activation factor) complex which consists of UAF30, RRN5, RRN9, RRN10, and histones H3 and H4.

The protein localises to the nucleus. It localises to the nucleolus. Functionally, component of the UAF (upstream activation factor) complex which interacts with the upstream element of the RNA polymerase I promoter and forms a stable preinitiation complex. Together with SPT15/TBP UAF seems to stimulate basal transcription to a fully activated level. This Saccharomyces cerevisiae (strain ATCC 204508 / S288c) (Baker's yeast) protein is RNA polymerase I-specific transcription initiation factor RRN10 (RRN10).